The chain runs to 172 residues: 3-hydroxydecanoyl-[acyl-carrier-protein] dehydratase (172 aa).

His-71 is an active-site residue.

It belongs to the thioester dehydratase family. FabA subfamily. In terms of assembly, homodimer.

It is found in the cytoplasm. The catalysed reaction is a (3R)-hydroxyacyl-[ACP] = a (2E)-enoyl-[ACP] + H2O. It carries out the reaction (3R)-hydroxydecanoyl-[ACP] = (2E)-decenoyl-[ACP] + H2O. It catalyses the reaction (2E)-decenoyl-[ACP] = (3Z)-decenoyl-[ACP]. It participates in lipid metabolism; fatty acid biosynthesis. Functionally, necessary for the introduction of cis unsaturation into fatty acids. Catalyzes the dehydration of (3R)-3-hydroxydecanoyl-ACP to E-(2)-decenoyl-ACP and then its isomerization to Z-(3)-decenoyl-ACP. Can catalyze the dehydratase reaction for beta-hydroxyacyl-ACPs with saturated chain lengths up to 16:0, being most active on intermediate chain length. The sequence is that of 3-hydroxydecanoyl-[acyl-carrier-protein] dehydratase from Brucella ovis (strain ATCC 25840 / 63/290 / NCTC 10512).